The following is a 495-amino-acid chain: Cyclic GMP-AMP synthase (495 aa).

Positions 1 to 128 (MAARRGKSTR…AGATELAAPA (128 aa)) are disordered. The segment at 1-134 (MAARRGKSTR…AAPARMEAPP (134 aa)) is DNA-binding. Lys-7 is subject to N6-acetyllysine. Ser-13 is modified (phosphoserine). 2 stretches are compositionally biased toward basic and acidic residues: residues 52-76 (CRREKSGPDPREKPQVRTRTARAED) and 105-116 (RAREARSARELR). Residue Lys-56 is modified to N6-acetyllysine. Position 57 is a phosphoserine (Ser-57). A required for association with the cell membrane region spans residues 57-68 (SGPDPREKPQVR). Positions 103–134 (SCRAREARSARELRPQAGATELAAPARMEAPP) are required for activation upon DNA viral infection. Residues 143 to 148 (LEKVRL) carry the Nuclear export signal motif. An N6-lactoyllysine modification is found at Lys-145. The tract at residues 147–190 (RLSRHEISEAAEVVNWVVEHLLRRLQGGESEFKGVALLRTGSYY) is DNA-binding. A PolyADP-ribosyl glutamic acid modification is found at Glu-165. Thr-186 is a binding site for GTP. Ser-188 bears the Phosphoserine mark. ATP is bound at residue Ser-188. Tyr-190 is modified (phosphotyrosine). Positions 200 and 202 each coordinate Mg(2+). Asp-202 contributes to the 2',3'-cGAMP binding site. Lys-206 participates in a covalent cross-link: Glycyl lysine isopeptide (Lys-Gly) (interchain with G-Cter in SUMO). A Glycyl lysine isopeptide (Lys-Gly) (interchain with G-Cter in ubiquitin) cross-link involves residue Lys-260. Glu-261 is modified (5-glutamyl polyglutamate). Positions 268–278 (GVTVERKRRGS) match the Nuclear localization signal motif. Residue Ser-278 is modified to Phosphoserine. Residue Asp-294 coordinates GTP. Residue Asp-294 participates in Mg(2+) binding. A 2',3'-cGAMP-binding site is contributed by Asp-294. Positions 316 to 357 (SQWLGAKVKNNLKRQPFYLVPKHAKEGSGFQEETWRLSFSHI) are interaction with collided ribosomes. Lys-322 participates in a covalent cross-link: Glycyl lysine isopeptide (Lys-Gly) (interchain with G-Cter in SUMO); alternate. Lys-322 is covalently cross-linked (Glycyl lysine isopeptide (Lys-Gly) (interchain with G-Cter in ubiquitin); alternate). 2',3'-cGAMP contacts are provided by Lys-337 and Arg-351. 351–358 (RLSFSHIE) is a binding site for GTP. Residue Glu-358 coordinates ATP. Lys-359 is subject to N6-acetyllysine. Lys-359 is covalently cross-linked (Glycyl lysine isopeptide (Lys-Gly) (interchain with G-Cter in SUMO); alternate). Lys-359 is covalently cross-linked (Glycyl lysine isopeptide (Lys-Gly) (interchain with G-Cter in ubiquitin); alternate). The interval 359–382 (KDILKNHGQSKTCCEIDGVKCCRK) is DNA-binding. Position 365 (His-365) interacts with Zn(2+). Position 369 is an N6-acetyllysine (Lys-369). Lys-369 is covalently cross-linked (Glycyl lysine isopeptide (Lys-Gly) (interchain with G-Cter in SUMO)). 3 residues coordinate Zn(2+): Cys-371, Cys-372, and Cys-379. Residues Cys-379 and Cys-380 are each lipidated (S-palmitoyl cysteine). Glycyl lysine isopeptide (Lys-Gly) (interchain with G-Cter in ubiquitin) cross-links involve residues Lys-386, Lys-389, Lys-396, and Lys-397. Lys-389 carries the post-translational modification N6-acetyllysine. Position 389 (Lys-389) interacts with ATP. The residue at position 410 (Ser-410) is a Phosphoserine. Position 410-414 (410-414 (SYHVK)) interacts with ATP. The S-palmitoyl cysteine moiety is linked to residue Cys-449. Lys-481 carries the post-translational modification N6-methyllysine.

It belongs to the mab-21 family. Monomer in the absence of DNA. Homodimer in presence of dsDNA: forms a 2:2 dimer with two enzymes binding to two DNA molecules. Interacts with nucleosomes; interaction is mainly mediated via histones H2A and H2B and inactivates the nucleotidyltransferase activity by blocking DNA-binding and subsequent activation. Interacts with PQBP1 (via WW domain). Interacts with TRIM14; this interaction recruits USP14, leading to deubiquitinate and stabilize CGAS and promote type I interferon production. Interacts with ZCCHC3; promoting sensing of dsDNA by CGAS. Interacts (when not monomethylated) with (poly-ADP-ribosylated) PARP1; interaction takes place in the nucleus and prevents the formation of the PARP1-TIMELESS complex. Interacts (when monomethylated) with SGF29; interaction with SGF29 prevents interaction with PARP1. Interacts with PCBP2; preventing the formation of liquid-like droplets in which CGAS is activated. Interacts with IRGM; promoting CGAS degradation. Mg(2+) is required as a cofactor. It depends on Mn(2+) as a cofactor. Zn(2+) serves as cofactor. Post-translationally, the N-terminal disordered part (1-134) is phosphorylated by AURKB during the G2-M transition, blocking CGAS liquid phase separation and preventing activation. Phosphorylation at Tyr-190 by BLK promotes cytosolic retention. Localizes into the nucleus following dephosphorylation at Tyr-190. Phosphorylation at Ser-410 activates the nucleotidyltransferase activity. Dephosphorylation at Ser-410 by PPP6C impairs its ability to bind GTP, thereby inactivating it. Phosphorylation at Ser-188 by PRKDC inhibits its cyclic GMP-AMP synthase activity by impairing homodimerization and activation. Phosphorylation at Ser-278 by AKT (AKT1, AKT2 or AKT3) suppresses the nucleotidyltransferase activity. Phosphorylation at Ser-278 by CDK1 during mitosis leads to its inhibition, thereby preventing CGAS activation by self-DNA during mitosis. Dephosphorylated at Ser-278 by protein phosphatase PP1 upon mitotic exit. In terms of processing, ubiquitinated at Lys-389 via 'Lys-48'-linked polyubiquitin chains, leading to its SQSTM1-mediated autophagic degradation. Interaction with TRIM14 promotes recruitment of USP14, leading to deubiquitinate Lys-389 and stabilize CGAS. Ubiquitinated at Lys-359 by RNF185 via 'Lys-27'-linked polyubiquitination, promoting CGAS cyclic GMP-AMP synthase activity. Monoubiquitination at Lys-322 by TRIM56 promotes oligomerization and subsequent activation. Monoubiquitination by TRIM41 promotes CGAS activation. Ubiquitination at Lys-260 via 'Lys-48'-linked polyubiquitination promotes its degradation. Deubiquitination at Lys-260 by USP29 promotes its stabilization. Deubiquitinated by USP27X, promoting its stabilization. Ubiquitinated at Lys-386 via 'Lys-63'-linked polyubiquitin chains by MARCHF8, leading to the inhibition of its DNA binding ability. In cycling cells, nucleosome-bound CGAS is ubiquitinated at Lys-396 and Lys-397 via 'Lys-48'-linked polyubiquitin chains by the ECS(SPSB3) complex, leading to its degradation: ubiquitination and degradation of nuclear CGAS during G1 and G2 phases is required to promote low intranuclear CGAS abundance before the next mitotic cycle. Sumoylated at Lys-206 by TRIM38 in uninfected cells and during the early phase of viral infection, promoting its stability by preventing ubiquitination at Lys-260 and subsequent degradation. Desumoylated by SENP2 during the late phase of viral infection. Sumoylation at Lys-322, Lys-359 and Lys-369 prevents DNA-binding, oligomerization and nucleotidyltransferase activity. Desumoylation at Lys-322, Lys-359 and Lys-369 by SENP7 relieves inhibition and activates CGAS. Post-translationally, polyglutamylated by TTLL6 at Glu-261, leading to impair DNA-binding activity. Deglutamylated by AGBL5/CCP5 and AGBL6/CCP6. In terms of processing, acetylation at Lys-359, Lys-369 and Lys-389 inhibits the cyclic GMP-AMP synthase activity. Deacetylated upon cytosolic DNA challenge such as viral infections. Acetylation by KAT5 increases the cyclic GMP-AMP synthase activity by promoting DNA-binding and subsequent activation. Proteolytically cleaved by apoptotic caspases during apoptosis, leading to its inactivation. The damage of the nucleus and the mitochondria during apoptosis leads to leakage of nuclear and mitochondrial DNA, which activate CGAS: cleavage and inactivation during apoptosis in required to prevent cytokine overproduction. Cleaved by CASP7 and CASP3 during virus-induced apoptosis, thereby inactivating it and preventing cytokine overproduction. Cleaved by CASP1 upon DNA virus infection; the cleavage impairs cGAMP production. Also cleaved by the pyroptotic CASP4 during non-canonical inflammasome activation; does not cut at the same sites than CASP1. Post-translationally, degraded via selective autophagy following interaction with IRGM. IRGM promotes CGAS recruitment to autophagosome membranes, promoting its SQSTM1/p62-dependent autophagic degradation. In terms of processing, poly-ADP-ribosylation at Glu-165 by PARP1 impairs DNA-binding, thereby preventing the cyclic GMP-AMP synthase activity. Palmitoylation at Cys-449 by ZDHHC18 impairs DNA-binding, thereby preventing the cyclic GMP-AMP synthase activity. Palmitoylation at Cys-379 and Cys-380 by ZDHHC9 promotes homodimerization and cyclic GMP-AMP synthase activity. Depalmitoylation at Cys-379 and Cys-380 by LYPLAL1 impairs homodimerization and cyclic GMP-AMP synthase activity. Post-translationally, monomethylated at Lys-481 by SETD7. Monomethylation promotes interaction with SGF29, preventing interaction between PARP1 nad SGF29. Demethylation by RIOX1 promotes interaction with PARP1, followed by PARP1 inactivation. In terms of processing, lactylation by AARS2 prevents ability to undergo liquid-liquid phase separation (LLPS), thereby inhibiting CGAS activation.

The protein resides in the nucleus. It localises to the chromosome. The protein localises to the cell membrane. It is found in the cytoplasm. Its subcellular location is the cytosol. The enzyme catalyses GTP + ATP = 2',3'-cGAMP + 2 diphosphate. It catalyses the reaction GTP + ATP = pppGp(2'-5')A + diphosphate. The catalysed reaction is pppGp(2'-5')A = 2',3'-cGAMP + diphosphate. Its activity is regulated as follows. The enzyme activity is strongly increased by double-stranded DNA (dsDNA), but not by single-stranded DNA or RNA. DNA-binding induces the formation of liquid-like droplets in which CGAS is activated. Liquid-like droplets also create a selective environment that restricts entry of negative regulators, such as TREX1 or BANF1/BAF, allowing sensing of DNA. A number of mechanisms exist to restrict its activity toward self-DNA. The nucleotidyltransferase activity is inhibited in the nucleus via its association with nucleosomes: interacts with the acidic patch of histones H2A and H2B, thereby blocking DNA-binding and subsequent activation. CGAS is also inactive when associated with mitotic chromatin. Chromatin-bound CGAS cannot be activated by exogenous DNA in mitotic cells: phosphorylation of the N-terminal disordered part by AURKB during the G2-M transition blocks CGAS liquid phase separation and activation. Activity toward self-DNA is inhibited by BANF1/BAF upon acute loss of nuclear membrane integrity: BANF1/BAF acts by outcompeting CGAS for DNA-binding, thereby preventing CGAS activation. DNA-induced activation at micronuclei is also limited by TREX1, which degrades micronuclear DNA upon nuclear envelope rupture, thereby preventing CGAS activation. CGAS can be released from nucleosomes and activated by MRE11 component of the MRN complex, which displaces CGAS from acidic-patch-mediated sequestration. Acetylation at Lys-359, Lys-369 and Lys-389 inhibits the cyclic GMP-AMP synthase activity. Acetylation by KAT5 increases the cyclic GMP-AMP synthase activity by promoting DNA-binding and subsequent activation. Phosphorylation at Ser-278 suppresses the nucleotidyltransferase activity. Phosphorylation at Ser-410 promotes the cyclic GMP-AMP synthase activity. Phosphorylation at Ser-188 inhibits its cyclic GMP-AMP synthase activity. Ubiquitination at Lys-359 via 'Lys-27'-linked polyubiquitination enhances the cyclic GMP-AMP synthase activity. Monoubiquitination at Lys-322 promotes oligomerization and subsequent activation. Sumoylation at Lys-322, Lys-359 and Lys-369 prevents DNA-binding, oligomerization and nucleotidyltransferase activity. The enzyme activity is impaired by the cleavage by CASP1. In addition to DNA, also activated by collided ribosomes upon translation stress: specifically binds collided ribosomes, promoting its activation and triggering type-I interferon production. Functionally, nucleotidyltransferase that catalyzes the formation of cyclic GMP-AMP (2',3'-cGAMP) from ATP and GTP and plays a key role in innate immunity. Catalysis involves both the formation of a 2',5' phosphodiester linkage at the GpA step and the formation of a 3',5' phosphodiester linkage at the ApG step, producing c[G(2',5')pA(3',5')p]. Acts as a key DNA sensor: directly binds double-stranded DNA (dsDNA), inducing the formation of liquid-like droplets in which CGAS is activated, leading to synthesis of 2',3'-cGAMP, a second messenger that binds to and activates STING1, thereby triggering type-I interferon production. Preferentially binds long dsDNA (around 45 bp) and forms ladder-like networks that function cooperatively to stabilize individual cGAS-dsDNA complexes. Acts as a key foreign DNA sensor, the presence of double-stranded DNA (dsDNA) in the cytoplasm being a danger signal that triggers the immune responses. Has antiviral activity by sensing the presence of dsDNA from DNA viruses in the cytoplasm. Also acts as an innate immune sensor of infection by retroviruses by detecting the presence of reverse-transcribed DNA in the cytosol. Detection of retroviral reverse-transcribed DNA in the cytosol may be indirect and be mediated via interaction with PQBP1, which directly binds reverse-transcribed retroviral DNA. Also detects the presence of DNA from bacteria. 2',3'-cGAMP can be transferred from producing cells to neighboring cells through gap junctions, leading to promote STING1 activation and convey immune response to connecting cells. 2',3'-cGAMP can also be transferred between cells by virtue of packaging within viral particles contributing to IFN-induction in newly infected cells in a cGAS-independent but STING1-dependent manner. Also senses the presence of neutrophil extracellular traps (NETs) that are translocated to the cytosol following phagocytosis, leading to synthesis of 2',3'-cGAMP. In addition to foreign DNA, can also be activated by endogenous nuclear or mitochondrial DNA. When self-DNA leaks into the cytosol during cellular stress (such as mitochondrial stress, DNA damage, mitotic arrest or senescence), or is present in form of cytosolic micronuclei, CGAS is activated leading to a state of sterile inflammation. Acts as a regulator of cellular senescence by binding to cytosolic chromatin fragments that are present in senescent cells, leading to trigger type-I interferon production via STING1 and promote cellular senescence. Also involved in the inflammatory response to genome instability and double-stranded DNA breaks: acts by localizing to micronuclei arising from genome instability. Micronuclei, which are frequently found in cancer cells, consist of chromatin surrounded by their own nuclear membrane: following breakdown of the micronuclear envelope, a process associated with chromothripsis, CGAS binds self-DNA exposed to the cytosol, leading to 2',3'-cGAMP synthesis and subsequent activation of STING1 and type-I interferon production. In a healthy cell, CGAS is however kept inactive even in cellular events that directly expose it to self-DNA, such as mitosis, when cGAS associates with chromatin directly after nuclear envelope breakdown or remains in the form of postmitotic persistent nuclear cGAS pools bound to chromatin. Nuclear CGAS is inactivated by chromatin via direct interaction with nucleosomes, which block CGAS from DNA binding and thus prevent CGAS-induced autoimmunity. Also acts as a suppressor of DNA repair in response to DNA damage: inhibits homologous recombination repair by interacting with PARP1, the CGAS-PARP1 interaction leading to impede the formation of the PARP1-TIMELESS complex. In addition to DNA, also sense translation stress: in response to translation stress, translocates to the cytosol and associates with collided ribosomes, promoting its activation and triggering type-I interferon production. In Sus scrofa (Pig), this protein is Cyclic GMP-AMP synthase.